The chain runs to 665 residues: Translation factor guf1, mitochondrial (665 aa).

A mitochondrion-targeting transit peptide spans 1-53 (MRGCLQVLRWLSTSPARRPVSSGLRLRSYEIVSPSILRPFTSTVRRQAQASRN). The tr-type G domain occupies 67–247 (ERFRNFCIVA…TVIERIPAPV (181 aa)). GTP contacts are provided by residues 76–83 (AHVDHGKS), 140–144 (DTPGH), and 194–197 (NKVD).

This sequence belongs to the TRAFAC class translation factor GTPase superfamily. Classic translation factor GTPase family. LepA subfamily.

It is found in the mitochondrion inner membrane. The catalysed reaction is GTP + H2O = GDP + phosphate + H(+). Promotes mitochondrial protein synthesis. May act as a fidelity factor of the translation reaction, by catalyzing a one-codon backward translocation of tRNAs on improperly translocated ribosomes. Binds to mitochondrial ribosomes in a GTP-dependent manner. This is Translation factor guf1, mitochondrial (guf1) from Talaromyces stipitatus (strain ATCC 10500 / CBS 375.48 / QM 6759 / NRRL 1006) (Penicillium stipitatum).